Consider the following 276-residue polypeptide: 4-deoxy-L-threo-5-hexosulose-uronate ketol-isomerase (276 aa).

4 residues coordinate Zn(2+): H194, H196, E201, and H243.

It belongs to the KduI family. Zn(2+) serves as cofactor.

It catalyses the reaction 5-dehydro-4-deoxy-D-glucuronate = 3-deoxy-D-glycero-2,5-hexodiulosonate. It participates in glycan metabolism; pectin degradation; 2-dehydro-3-deoxy-D-gluconate from pectin: step 4/5. Functionally, catalyzes the isomerization of 5-dehydro-4-deoxy-D-glucuronate to 3-deoxy-D-glycero-2,5-hexodiulosonate. In Shouchella clausii (strain KSM-K16) (Alkalihalobacillus clausii), this protein is 4-deoxy-L-threo-5-hexosulose-uronate ketol-isomerase.